The primary structure comprises 814 residues: Flagellar radial spoke protein 1 (814 aa).

R243 bears the Asymmetric dimethylarginine mark. Positions 283–346 are disordered; that stretch reads VQSISTGNRE…PPPPAPKVDP (64 aa). Over residues 303 to 329 the composition is skewed to acidic residues; it reads PEEDEEEEKEEEKEEPEEGEEGEEGEG. R428 carries the asymmetric dimethylarginine modification. 6 MORN repeats span residues 577–597, 600–622, 623–645, 646–662, 671–685, and 691–707; these read YFGS…FATG, YAGE…DGGT, YVGE…DGSV, YTGS…GVYW, GEWK…GTYE, and FEGE…ATYT. Positions 739–769 are disordered; the sequence is GIPPGSGDEPQLDEEGQPIEDTDKPPLPAHP. A compositionally biased stretch (acidic residues) spans 748-758; sequence PQLDEEGQPIE.

In terms of processing, asymmetrically dimethylated at Arg-243 and Arg-428 during flagellum resorption. Probably methylated by PRMT1.

Its subcellular location is the cytoplasm. It is found in the cytoskeleton. It localises to the flagellum axoneme. Functionally, flagellar radial spokes contribute to the regulation of dynein arm activity and thus the pattern of flagellar bending. They consist of a thin stalk, which is attached to the a subfiber of the outer doublet microtubule, and a bulbous head, which is attached to the stalk and appears to interact with the projections from the central pair of microtubules. The polypeptide is Flagellar radial spoke protein 1 (Chlamydomonas reinhardtii (Chlamydomonas smithii)).